The chain runs to 214 residues: uncharacterized protein (214 aa).

Functionally, URF2 product may be involved in the transfer of iron-sulfur clusters to the NADH dehydrogenase complex. It may also be required for the assembly of the NADH dehydrogenase complex. This is an uncharacterized protein from Paracoccus denitrificans.